The sequence spans 297 residues: 4-hydroxy-tetrahydrodipicolinate synthase (297 aa).

Thr-46 is a pyruvate binding site. Tyr-134 (proton donor/acceptor) is an active-site residue. Residue Lys-162 is the Schiff-base intermediate with substrate of the active site. Residue Ile-204 participates in pyruvate binding.

The protein belongs to the DapA family. In terms of assembly, homotetramer; dimer of dimers.

The protein resides in the cytoplasm. It carries out the reaction L-aspartate 4-semialdehyde + pyruvate = (2S,4S)-4-hydroxy-2,3,4,5-tetrahydrodipicolinate + H2O + H(+). Its pathway is amino-acid biosynthesis; L-lysine biosynthesis via DAP pathway; (S)-tetrahydrodipicolinate from L-aspartate: step 3/4. Functionally, catalyzes the condensation of (S)-aspartate-beta-semialdehyde [(S)-ASA] and pyruvate to 4-hydroxy-tetrahydrodipicolinate (HTPA). This chain is 4-hydroxy-tetrahydrodipicolinate synthase, found in Stenotrophomonas maltophilia (strain R551-3).